The sequence spans 258 residues: Alpha-hydroxynitrile lyase (258 aa).

Active-site proton donor/acceptor residues include serine 81 and histidine 236.

It belongs to the AB hydrolase superfamily. Hydroxynitrile lyase family. In terms of assembly, homodimer.

The catalysed reaction is (R)-mandelonitrile = benzaldehyde + hydrogen cyanide. In terms of biological role, involved in cyanogenesis, the release of HCN from injured tissues. Displays R-selective hydroxynitrile lyase activity. Also accepts nitromethane (MeNO2) as a donor in a reaction with aromatic aldehydes to yield (R)-beta-nitro alcohols. This chain is Alpha-hydroxynitrile lyase, found in Arabidopsis thaliana (Mouse-ear cress).